A 1060-amino-acid chain; its full sequence is Isoleucine--tRNA ligase (1060 aa).

The short motif at 55 to 65 (PTANGTPGVHH) is the 'HIGH' region element. A 'KMSKS' region motif is present at residues 608–612 (KMSKH). K611 contributes to the ATP binding site.

This sequence belongs to the class-I aminoacyl-tRNA synthetase family. IleS type 2 subfamily. In terms of assembly, monomer. Zn(2+) serves as cofactor.

It is found in the cytoplasm. It carries out the reaction tRNA(Ile) + L-isoleucine + ATP = L-isoleucyl-tRNA(Ile) + AMP + diphosphate. Catalyzes the attachment of isoleucine to tRNA(Ile). As IleRS can inadvertently accommodate and process structurally similar amino acids such as valine, to avoid such errors it has two additional distinct tRNA(Ile)-dependent editing activities. One activity is designated as 'pretransfer' editing and involves the hydrolysis of activated Val-AMP. The other activity is designated 'posttransfer' editing and involves deacylation of mischarged Val-tRNA(Ile). This chain is Isoleucine--tRNA ligase, found in Thermobifida fusca (strain YX).